A 467-amino-acid chain; its full sequence is Probable tryptophanase (467 aa).

N6-(pyridoxal phosphate)lysine is present on Lys-263.

The protein belongs to the beta-eliminating lyase family. Requires pyridoxal 5'-phosphate as cofactor.

The enzyme catalyses L-tryptophan + H2O = indole + pyruvate + NH4(+). The protein operates within amino-acid degradation; L-tryptophan degradation via pyruvate pathway; indole and pyruvate from L-tryptophan: step 1/1. The protein is Probable tryptophanase (tnaA) of Aeropyrum pernix (strain ATCC 700893 / DSM 11879 / JCM 9820 / NBRC 100138 / K1).